A 322-amino-acid chain; its full sequence is Probable 5-dehydro-4-deoxyglucarate dehydratase 2 (322 aa).

It belongs to the DapA family.

It catalyses the reaction 5-dehydro-4-deoxy-D-glucarate + H(+) = 2,5-dioxopentanoate + CO2 + H2O. The protein operates within carbohydrate acid metabolism; D-glucarate degradation; 2,5-dioxopentanoate from D-glucarate: step 2/2. In Streptomyces coelicolor (strain ATCC BAA-471 / A3(2) / M145), this protein is Probable 5-dehydro-4-deoxyglucarate dehydratase 2.